The primary structure comprises 369 residues: MEGEKGSKTRKGDALAREKLLEIAEKIYNQFEEEVVPSVSLPSRTKANLEYSDESDVWVYGDRESERSAKTVKGAFQLLKTTYATDFLINEHLARNRGSTLRELYYISEGWDYAKFKEQGESDRLIEDLEILTSLQREYFHMRPEEDGATMFGPIEITEQTKRGERNIHCQKDVGEGGYQIPFNVENIEFQKHDASMIIAIETGGMYARLMENGFDEAYNAILVHLKGQPARSTRRIIKRMNEELGIPVAVFTDGDPWSYRIYASVAYGAIKSAHLSEFMATPAAKFLGLQPSDIVEYELSTDKLTEQDVSALRSELSDPRFESDYWKEQIQLQLDIGKKAEQQAFAGKGLDFVTEVYLPNRLKEMGMI.

The region spanning 11 to 149 (KGDALAREKL…FHMRPEEDGA (139 aa)) is the Topo IIA-type catalytic domain. Tyr-106 functions as the O-(5'-phospho-DNA)-tyrosine intermediate in the catalytic mechanism. Positions 202 and 254 each coordinate Mg(2+).

It belongs to the TOP6A family. As to quaternary structure, homodimer. Heterotetramer of two Top6A and two Top6B chains. Mg(2+) is required as a cofactor.

It carries out the reaction ATP-dependent breakage, passage and rejoining of double-stranded DNA.. In terms of biological role, relaxes both positive and negative superturns and exhibits a strong decatenase activity. This chain is Type 2 DNA topoisomerase 6 subunit A, found in Methanosarcina mazei (strain ATCC BAA-159 / DSM 3647 / Goe1 / Go1 / JCM 11833 / OCM 88) (Methanosarcina frisia).